A 203-amino-acid chain; its full sequence is Casparian strip membrane protein 1 (203 aa).

At Ala2 the chain carries N-acetylalanine. Topologically, residues 2-40 (AKESTTIDVGEPSTVTKSSSHVVKKKGFVAAAAGGGAKR) are cytoplasmic. Residues 41–61 (GLAIFDFLLRLAAIGVTIGAA) traverse the membrane as a helical segment. The Extracellular segment spans residues 62–92 (SVMYTAQETLPFFTQFLQFQAGYDDLPAFQY). Residues 93–113 (FVIAVAIVASYLVLSLPFSIV) traverse the membrane as a helical segment. The Cytoplasmic segment spans residues 114 to 124 (TIVRPLAVAPR). Residues 125-145 (LILLIFDTLVVTLNTSAAAAA) form a helical membrane-spanning segment. The Extracellular segment spans residues 146–177 (ASIVYLAHNGNQSTNWLPICQQFGDFCQNVST). 2 N-linked (GlcNAc...) asparagine glycosylation sites follow: Asn156 and Asn174. Residues 178-198 (AVVAASIAILFFIVLIIISAI) traverse the membrane as a helical segment. Residues 199 to 203 (ALKRH) are Cytoplasmic-facing.

Belongs to the Casparian strip membrane proteins (CASP) family. As to quaternary structure, homodimer and heterodimers.

The protein localises to the cell membrane. In terms of biological role, regulates membrane-cell wall junctions and localized cell wall deposition. Required for establishment of the Casparian strip membrane domain (CSD) and the subsequent formation of Casparian strips, a cell wall modification of the root endodermis that determines an apoplastic barrier between the intraorganismal apoplasm and the extraorganismal apoplasm and prevents lateral diffusion. The protein is Casparian strip membrane protein 1 of Arabidopsis lyrata subsp. lyrata (Lyre-leaved rock-cress).